A 201-amino-acid polypeptide reads, in one-letter code: Transgelin (201 aa).

An N-acetylalanine modification is found at A2. The Calponin-homology (CH) domain occupies 24 to 137 (EELEERLVEW…RTLMALGSLA (114 aa)). Position 166 is a phosphoserine (S166). K172 is subject to N6-acetyllysine. One copy of the Calponin-like repeat lies at 175-200 (IGLQMGSNRGASQAGMTGYGRPRQII). S181 bears the Phosphoserine mark. R183 carries the post-translational modification Omega-N-methylarginine.

Belongs to the calponin family.

Its subcellular location is the cytoplasm. Functionally, actin cross-linking/gelling protein. Involved in calcium interactions and contractile properties of the cell that may contribute to replicative senescence. This is Transgelin (TAGLN) from Homo sapiens (Human).